A 597-amino-acid polypeptide reads, in one-letter code: Aspartate--tRNA(Asp/Asn) ligase (597 aa).

Glu-178 contributes to the L-aspartate binding site. An aspartate region spans residues Gln-202 to Lys-205. Arg-224 serves as a coordination point for L-aspartate. ATP contacts are provided by residues Arg-224–Glu-226 and Gln-233. His-458 is an L-aspartate binding site. An ATP-binding site is contributed by Glu-488. Position 495 (Arg-495) interacts with L-aspartate. Gly-540–Arg-543 is a binding site for ATP.

The protein belongs to the class-II aminoacyl-tRNA synthetase family. Type 1 subfamily. As to quaternary structure, homodimer.

The protein resides in the cytoplasm. It catalyses the reaction tRNA(Asx) + L-aspartate + ATP = L-aspartyl-tRNA(Asx) + AMP + diphosphate. In terms of biological role, aspartyl-tRNA synthetase with relaxed tRNA specificity since it is able to aspartylate not only its cognate tRNA(Asp) but also tRNA(Asn). Reaction proceeds in two steps: L-aspartate is first activated by ATP to form Asp-AMP and then transferred to the acceptor end of tRNA(Asp/Asn). The polypeptide is Aspartate--tRNA(Asp/Asn) ligase (Cyanothece sp. (strain PCC 7425 / ATCC 29141)).